The chain runs to 670 residues: DNA ligase (670 aa).

Residues 32-36 (DAYYD), 81-82 (SL), and glutamate 110 contribute to the NAD(+) site. The active-site N6-AMP-lysine intermediate is lysine 112. NAD(+)-binding residues include arginine 133, glutamate 170, lysine 289, and lysine 313. Zn(2+) is bound by residues cysteine 407, cysteine 410, cysteine 425, and cysteine 431. A BRCT domain is found at 590–670 (EDELRLKGQT…ELLVFLGLAG (81 aa)).

Belongs to the NAD-dependent DNA ligase family. LigA subfamily. Mg(2+) is required as a cofactor. Requires Mn(2+) as cofactor.

The catalysed reaction is NAD(+) + (deoxyribonucleotide)n-3'-hydroxyl + 5'-phospho-(deoxyribonucleotide)m = (deoxyribonucleotide)n+m + AMP + beta-nicotinamide D-nucleotide.. Functionally, DNA ligase that catalyzes the formation of phosphodiester linkages between 5'-phosphoryl and 3'-hydroxyl groups in double-stranded DNA using NAD as a coenzyme and as the energy source for the reaction. It is essential for DNA replication and repair of damaged DNA. The chain is DNA ligase from Shewanella denitrificans (strain OS217 / ATCC BAA-1090 / DSM 15013).